A 209-amino-acid polypeptide reads, in one-letter code: Ribonuclease HII (209 aa).

Positions 7 to 198 (GPVAGVDEAG…VAKAHQEWLH (192 aa)) constitute an RNase H type-2 domain. Residues aspartate 13, glutamate 14, and aspartate 107 each contribute to the a divalent metal cation site.

It belongs to the RNase HII family. Mn(2+) serves as cofactor. Requires Mg(2+) as cofactor.

The protein localises to the cytoplasm. It carries out the reaction Endonucleolytic cleavage to 5'-phosphomonoester.. Its function is as follows. Endonuclease that specifically degrades the RNA of RNA-DNA hybrids. This chain is Ribonuclease HII, found in Corynebacterium glutamicum (strain ATCC 13032 / DSM 20300 / JCM 1318 / BCRC 11384 / CCUG 27702 / LMG 3730 / NBRC 12168 / NCIMB 10025 / NRRL B-2784 / 534).